Reading from the N-terminus, the 44-residue chain is MRDLKTYLSVAPVVSTLWFAALAGLLIEINRLFPDALIFPFFSF.

A helical transmembrane segment spans residues 7–27 (YLSVAPVVSTLWFAALAGLLI).

Belongs to the PsaJ family.

Its subcellular location is the plastid. The protein resides in the chloroplast thylakoid membrane. In terms of biological role, may help in the organization of the PsaE and PsaF subunits. The sequence is that of Photosystem I reaction center subunit IX from Lotus japonicus (Lotus corniculatus var. japonicus).